We begin with the raw amino-acid sequence, 144 residues long: Probable transcription termination protein NusA (144 aa).

The region spanning 101 to 144 is the KH domain; that stretch reads RTDIVVGVKPEEIGKVIGKEGKNIKLFKDAVSRYFNVNSISVKQ.

The protein belongs to the NusA family.

It localises to the cytoplasm. In terms of biological role, participates in transcription termination. This is Probable transcription termination protein NusA from Thermoplasma acidophilum (strain ATCC 25905 / DSM 1728 / JCM 9062 / NBRC 15155 / AMRC-C165).